Reading from the N-terminus, the 132-residue chain is Small ribosomal subunit protein uS8 (132 aa).

This sequence belongs to the universal ribosomal protein uS8 family. Part of the 30S ribosomal subunit. Contacts proteins S5 and S12.

In terms of biological role, one of the primary rRNA binding proteins, it binds directly to 16S rRNA central domain where it helps coordinate assembly of the platform of the 30S subunit. The protein is Small ribosomal subunit protein uS8 of Lactococcus lactis subsp. cremoris (strain MG1363).